The sequence spans 236 residues: MRFAVVTFPGSNGDHDALMAIRLGLGHAAELVWYTETDLSRFDCIIIPGGFSYGDYLRAGALARFAPVMSAVAREAEAGKPILGICNGFQILTEARLLPGALLRNASLEFVCDWVWVRVEQTRTPWTSQLAPGTLLRLPIAHGEGRYYVEAEELVALETNGQVVFRYVDADGLPTADANPNGSVANIAGVCNERGNVVGLMPHPERAYDRFVGGDDGLRILASVLSVGLEVAHSPR.

The 233-residue stretch at 2–234 folds into the Glutamine amidotransferase type-1 domain; the sequence is RFAVVTFPGS…LSVGLEVAHS (233 aa). C86 serves as the catalytic Nucleophile. Catalysis depends on residues H203 and E205.

Part of the FGAM synthase complex composed of 1 PurL, 1 PurQ and 2 PurS subunits.

It is found in the cytoplasm. It catalyses the reaction N(2)-formyl-N(1)-(5-phospho-beta-D-ribosyl)glycinamide + L-glutamine + ATP + H2O = 2-formamido-N(1)-(5-O-phospho-beta-D-ribosyl)acetamidine + L-glutamate + ADP + phosphate + H(+). The enzyme catalyses L-glutamine + H2O = L-glutamate + NH4(+). The protein operates within purine metabolism; IMP biosynthesis via de novo pathway; 5-amino-1-(5-phospho-D-ribosyl)imidazole from N(2)-formyl-N(1)-(5-phospho-D-ribosyl)glycinamide: step 1/2. In terms of biological role, part of the phosphoribosylformylglycinamidine synthase complex involved in the purines biosynthetic pathway. Catalyzes the ATP-dependent conversion of formylglycinamide ribonucleotide (FGAR) and glutamine to yield formylglycinamidine ribonucleotide (FGAM) and glutamate. The FGAM synthase complex is composed of three subunits. PurQ produces an ammonia molecule by converting glutamine to glutamate. PurL transfers the ammonia molecule to FGAR to form FGAM in an ATP-dependent manner. PurS interacts with PurQ and PurL and is thought to assist in the transfer of the ammonia molecule from PurQ to PurL. The protein is Phosphoribosylformylglycinamidine synthase subunit PurQ of Thermomicrobium roseum (strain ATCC 27502 / DSM 5159 / P-2).